The primary structure comprises 825 residues: Endochitinase A1 (825 aa).

The first 22 residues, 1 to 22 (MVSSKLSFVATAVAALAPLASA), serve as a signal peptide directing secretion. The GH18 domain maps to 29-338 (SNLAIYWGQG…DHMKDILLHC (310 aa)). The active-site Proton donor is glutamate 174. 3 disordered regions span residues 338 to 568 (CDPS…TTTA), 680 to 736 (PVTE…VSTS), and 750 to 792 (PLIL…YTQE). Over residues 344–554 (VTSSSAVPSS…STDESSTTVG (211 aa)) the composition is skewed to low complexity. An N-linked (GlcNAc...) asparagine glycan is attached at asparagine 559. Residues 701–712 (EGSNPTQPSGAS) are compositionally biased toward polar residues. An N-linked (GlcNAc...) asparagine glycan is attached at asparagine 717. Residues 772–792 (PSGQNSGSSSHVPIPPSYTQE) are compositionally biased toward polar residues. Glycine 800 is lipidated: GPI-anchor amidated glycine. Positions 801–825 (AASRVTGLGHGLVLTVLTLSAFFVL) are cleaved as a propeptide — removed in mature form.

This sequence belongs to the glycosyl hydrolase 18 family. Chitinase class III subfamily. Post-translationally, O-mannosylated by pmt4.

It is found in the cell membrane. It localises to the secreted. Its subcellular location is the cell wall. It carries out the reaction Random endo-hydrolysis of N-acetyl-beta-D-glucosaminide (1-&gt;4)-beta-linkages in chitin and chitodextrins.. With respect to regulation, the cyclic peptide natural product argifin acts as a specific inhibitor. Its function is as follows. GPI-anchored chitinase involved in the degradation of chitin, a component of the cell walls of fungi and exoskeletal elements of some animals (including worms and arthropods). Required to reshape the cell wall at the sites where cell wall remodeling and/or cell wall maturation actively take place such as sites of conidia formation. This chain is Endochitinase A1 (chiA1), found in Aspergillus fumigatus (Neosartorya fumigata).